Consider the following 461-residue polypeptide: tRNA modification GTPase MnmE (461 aa).

Residues Arg21, Glu87, and Lys126 each contribute to the (6S)-5-formyl-5,6,7,8-tetrahydrofolate site. Residues 222-384 (QSTVVLYGEP…LLELLKSKLT (163 aa)) form the TrmE-type G domain. Asn232 lines the K(+) pocket. Residues 232–237 (NTGKSS), 251–257 (SDVPGTT), and 276–279 (DTAG) each bind GTP. Residue Ser236 coordinates Mg(2+). K(+) contacts are provided by Ser251, Val253, and Thr256. Mg(2+) is bound at residue Thr257. Lys461 provides a ligand contact to (6S)-5-formyl-5,6,7,8-tetrahydrofolate.

Belongs to the TRAFAC class TrmE-Era-EngA-EngB-Septin-like GTPase superfamily. TrmE GTPase family. As to quaternary structure, homodimer. Heterotetramer of two MnmE and two MnmG subunits. K(+) serves as cofactor.

Its subcellular location is the cytoplasm. Its function is as follows. Exhibits a very high intrinsic GTPase hydrolysis rate. Involved in the addition of a carboxymethylaminomethyl (cmnm) group at the wobble position (U34) of certain tRNAs, forming tRNA-cmnm(5)s(2)U34. This is tRNA modification GTPase MnmE from Leptospira biflexa serovar Patoc (strain Patoc 1 / Ames).